A 463-amino-acid polypeptide reads, in one-letter code: Glycine--tRNA ligase (463 aa).

Substrate is bound by residues Arg-102 and Glu-165. Residues 197-199, 207-212, 284-285, and 328-331 contribute to the ATP site; these read RNE, FRTREF, EL, and GLTR. 212 to 216 is a substrate binding site; it reads FEQME. 324–328 is a substrate binding site; it reads EPAAG.

It belongs to the class-II aminoacyl-tRNA synthetase family. Homodimer.

The protein resides in the cytoplasm. The enzyme catalyses tRNA(Gly) + glycine + ATP = glycyl-tRNA(Gly) + AMP + diphosphate. Its function is as follows. Catalyzes the attachment of glycine to tRNA(Gly). The polypeptide is Glycine--tRNA ligase (Mycobacterium bovis (strain ATCC BAA-935 / AF2122/97)).